Here is a 26-residue protein sequence, read N- to C-terminus: L-amino-acid oxidase (26 aa).

This sequence belongs to the flavin monoamine oxidase family. As to quaternary structure, monomer. FAD is required as a cofactor. In terms of processing, not glycosylated. In terms of tissue distribution, expressed by the ink gland.

The protein resides in the secreted. The enzyme catalyses an L-alpha-amino acid + O2 + H2O = a 2-oxocarboxylate + H2O2 + NH4(+). In terms of biological role, catalyzes the oxidative deamination of positively charged L-amino acids L-Lys and L-Arg but not of amino acids L-His, L-Asp or L-Glu. Has antibacterial activity against the Gram-positive bacterium S.aureus (MIC=15 ug/ml). This antibacterial activity is bacteriostatic in the absence of amino acids L-Lys or L-Arg but bactericidal in their presence. The antibacterial effect is largely dependent on H(2)O(2) produced in the oxidative deamination of substrates. Has hemagglutinating activity towards rabbit erythrocytes. Hemagglutinating activity is inhibited by the glycoprotein fetuin, but not by glucose, mannose, galactose, N-acetylglucosamine, N-acetylgalactosamine or sialic acid. In Aplysia dactylomela (Spotted sea hare), this protein is L-amino-acid oxidase.